The chain runs to 456 residues: Neurexin-3-beta (456 aa).

A signal peptide spans 1–35 (MHLRIHARRNPPRRPAWTLGIWSLFWGCIVSSVWS). The Extracellular portion of the chain corresponds to 36–381 (SSNVASSSSS…EVIRESSSTT (346 aa)). The segment at 41–63 (SSSSSPGSHSQHEHHFHGSKHHS) is disordered. Residues 52-63 (HEHHFHGSKHHS) show a composition bias toward basic residues. The Laminin G-like domain occupies 82-282 (ATYIFGKSGG…NPNIKINGSV (201 aa)). Positions 134 and 151 each coordinate Ca(2+). N-linked (GlcNAc...) asparagine glycosylation is present at Asn-181. Ca(2+) contacts are provided by Ile-233 and Asn-235. N-linked (GlcNAc...) asparagine glycosylation is found at Asn-279 and Asn-323. Residues 316–340 (ATTTTRKNRSTASIQPTSDDLVSSA) are disordered. The span at 325 to 340 (STASIQPTSDDLVSSA) shows a compositional bias: polar residues. Ser-339 is a glycosylation site (O-linked (Xyl...) (heparan sulfate) serine). The helical transmembrane segment at 382–402 (GMVVGIVAAAALCILILLYAM) threads the bilayer. The Cytoplasmic portion of the chain corresponds to 403-456 (YKYRNRDEGSYQVDETRNYISNSAQSNGTLLKEKPPSSKGGHKKQKNKDKEYYV). Positions 424 to 456 (NSAQSNGTLLKEKPPSSKGGHKKQKNKDKEYYV) are disordered.

It belongs to the neurexin family. In terms of assembly, weakly interacts with CBLN1 and CBLN2. Very weak binding, if any, to CBLN4. Specific isoforms bind neuroligins NLGN1, NLGN2 and NLGN3. Interacts with CLSTN3. In terms of processing, processed by alpha-secretase leading to the formation of an extracellular soluble protein as well as a C-terminal membrane-embedded fragment (CTF). Proteolysis of these CTFs by gamma-secretase releases intracellular domains (ICDs) and extracellular peptides. Post-translationally, O-glycosylated; contains heparan sulfate. Heparan sulfate attachment is required for synapse development by mediating interactions with neuroligins.

It is found in the presynaptic cell membrane. Its subcellular location is the secreted. Functionally, neuronal cell surface protein that may be involved in cell recognition and cell adhesion. May mediate intracellular signaling. Functions as part of a trans-synaptic complex by binding to cerebellins and postsynaptic GRID1. This interaction helps regulate the activity of NMDA and AMPA receptors at hippocampal synapses without affecting synapse formation. NRXN3B-CBLN2-GRID1 complex transduce presynaptic signals into postsynaptic AMPAR response. The sequence is that of Neurexin-3-beta (NRXN3) from Bos taurus (Bovine).